The sequence spans 2005 residues: Chitin synthase 8 (2005 aa).

In terms of domain architecture, Myosin motor spans 5 to 773 (DEVAKLSQLT…AFRELEDELR (769 aa)). ATP is bound at residue 108-115 (GDTSSGKS). N-linked (GlcNAc...) asparagine glycosylation is found at Asn-164, Asn-364, Asn-390, and Asn-546. The interval 585-631 (QSVKPMRAPSTRRPNRGNTIKRTNTIKKADDDDSDEDAADAADASTS) is disordered. The segment covering 615 to 624 (DDDSDEDAAD) has biased composition (acidic residues). The interval 647–669 (LDLLLETLEDTKTWFTLCLRPND) is actin-binding. Helical transmembrane passes span 929–949 (KWVA…LSRF) and 965–985 (LAIN…IVVL). N-linked (GlcNAc...) asparagine glycosylation occurs at Asn-1076. Helical transmembrane passes span 1232–1252 (ILLA…LAAL), 1604–1624 (LIFT…IVFI), and 1626–1646 (LLST…IVLV). N-linked (GlcNAc...) asparagine glycosylation occurs at Asn-1650. Transmembrane regions (helical) follow at residues 1653–1673 (VPLT…VIFL) and 1680–1700 (MIGW…FLPL). Residues Asn-1770 and Asn-1794 are each glycosylated (N-linked (GlcNAc...) asparagine). The interval 1796–1821 (SFGHSPSPSYGGTPSQFGAFAPGPGS) is disordered. Polar residues predominate over residues 1797–1811 (FGHSPSPSYGGTPSQ). Asn-1882 carries N-linked (GlcNAc...) asparagine glycosylation. The interval 1912–1950 (FATAEQQQQQQQQQQAAGLSGSGGSKSPPREAVAGGLPS) is disordered. The segment covering 1917–1930 (QQQQQQQQQQAAGL) has biased composition (low complexity). In terms of domain architecture, DEK-C spans 1948–2003 (LPSDSQIKLDIRSLIAESDLTTITKKQLRAKLEQKYATSIESKKAFINSEIENVLS).

The protein in the N-terminal section; belongs to the TRAFAC class myosin-kinesin ATPase superfamily. Myosin family. In the C-terminal section; belongs to the chitin synthase family. Class V subfamily.

Its subcellular location is the cell membrane. The protein resides in the cytoplasmic vesicle membrane. The protein localises to the cell tip. The catalysed reaction is [(1-&gt;4)-N-acetyl-beta-D-glucosaminyl](n) + UDP-N-acetyl-alpha-D-glucosamine = [(1-&gt;4)-N-acetyl-beta-D-glucosaminyl](n+1) + UDP + H(+). In terms of biological role, polymerizes chitin, a structural polymer of the cell wall and septum, by transferring the sugar moiety of UDP-GlcNAc to the non-reducing end of the growing chitin polymer. Involved in mating tube and dikaryotic hyphae formation and required for the formation of invading hyphae during plant infection. This is Chitin synthase 8 from Mycosarcoma maydis (Corn smut fungus).